A 312-amino-acid chain; its full sequence is Elongation factor Ts (312 aa).

An involved in Mg(2+) ion dislocation from EF-Tu region spans residues 84–87; sequence TDFL.

It belongs to the EF-Ts family.

The protein localises to the cytoplasm. In terms of biological role, associates with the EF-Tu.GDP complex and induces the exchange of GDP to GTP. It remains bound to the aminoacyl-tRNA.EF-Tu.GTP complex up to the GTP hydrolysis stage on the ribosome. This chain is Elongation factor Ts, found in Caulobacter sp. (strain K31).